Consider the following 253-residue polypeptide: Imidazole glycerol phosphate synthase subunit HisF (253 aa).

Catalysis depends on residues Asp11 and Asp130.

Belongs to the HisA/HisF family. As to quaternary structure, heterodimer of HisH and HisF.

Its subcellular location is the cytoplasm. The catalysed reaction is 5-[(5-phospho-1-deoxy-D-ribulos-1-ylimino)methylamino]-1-(5-phospho-beta-D-ribosyl)imidazole-4-carboxamide + L-glutamine = D-erythro-1-(imidazol-4-yl)glycerol 3-phosphate + 5-amino-1-(5-phospho-beta-D-ribosyl)imidazole-4-carboxamide + L-glutamate + H(+). It functions in the pathway amino-acid biosynthesis; L-histidine biosynthesis; L-histidine from 5-phospho-alpha-D-ribose 1-diphosphate: step 5/9. Its function is as follows. IGPS catalyzes the conversion of PRFAR and glutamine to IGP, AICAR and glutamate. The HisF subunit catalyzes the cyclization activity that produces IGP and AICAR from PRFAR using the ammonia provided by the HisH subunit. This chain is Imidazole glycerol phosphate synthase subunit HisF, found in Clostridium botulinum (strain Kyoto / Type A2).